A 259-amino-acid chain; its full sequence is Proteasome subunit alpha (259 aa).

This sequence belongs to the peptidase T1A family. In terms of assembly, the 20S proteasome core is composed of 14 alpha and 14 beta subunits that assemble into four stacked heptameric rings, resulting in a barrel-shaped structure. The two inner rings, each composed of seven catalytic beta subunits, are sandwiched by two outer rings, each composed of seven alpha subunits. The catalytic chamber with the active sites is on the inside of the barrel. Has a gated structure, the ends of the cylinder being occluded by the N-termini of the alpha-subunits. Is capped at one or both ends by the proteasome regulatory ATPase, PAN.

It is found in the cytoplasm. With respect to regulation, the formation of the proteasomal ATPase PAN-20S proteasome complex, via the docking of the C-termini of PAN into the intersubunit pockets in the alpha-rings, triggers opening of the gate for substrate entry. Interconversion between the open-gate and close-gate conformations leads to a dynamic regulation of the 20S proteasome proteolysis activity. In terms of biological role, component of the proteasome core, a large protease complex with broad specificity involved in protein degradation. The chain is Proteasome subunit alpha from Methanococcus maripaludis (strain C5 / ATCC BAA-1333).